Reading from the N-terminus, the 149-residue chain is Large ribosomal subunit protein bL9 (149 aa).

It belongs to the bacterial ribosomal protein bL9 family.

Its function is as follows. Binds to the 23S rRNA. The polypeptide is Large ribosomal subunit protein bL9 (Buchnera aphidicola subsp. Cinara cedri (strain Cc)).